Consider the following 630-residue polypeptide: Subtilisin-like protease 1 (630 aa).

The first 25 residues, 1-25, serve as a signal peptide directing secretion; the sequence is MVLTRRAALLLCPWVIQLVIKRTLA. Residues 26 to 202 constitute a propeptide, inhibition peptide; the sequence is GDILPNEGKK…IESDKLVGAD (177 aa). Positions 72–125 are disordered; that stretch reads NAYNPDRDAPKEELQKLQDQQETPSKQPNNLRNSPQKRAEKKESPGKNKKSLRL. Positions 76–87 are enriched in basic and acidic residues; that stretch reads PDRDAPKEELQK. Polar residues predominate over residues 94 to 107; it reads TPSKQPNNLRNSPQ. Residues 108 to 117 are compositionally biased toward basic and acidic residues; that stretch reads KRAEKKESPG. Ca(2+)-binding residues include Glu129, Asn130, Thr133, Pro135, and Gly190. The segment at 230–254 is disordered; sequence LEVPSGESPPSHAASSGSPFDDDDD. The segment covering 233–248 has biased composition (low complexity); that stretch reads PSGESPPSHAASSGSP. Residue Asp281 participates in Ca(2+) binding. Residues 287 to 604 enclose the Peptidase S8 domain; it reads QWGLDLARLD…GGYVDILRAV (318 aa). Intrachain disulfides connect Cys313–Cys423, Cys402–Cys419, and Cys465–Cys478. The active-site Charge relay system is Asp316. Ca(2+)-binding residues include Asp325, Glu336, Arg340, Val343, Asp344, Asp345, Asp346, Asn348, Val350, Asp352, and Asp353. His372 acts as the Charge relay system in catalysis. Ca(2+)-binding residues include Val383, Asn386, Ile388, and Ile390. Residue Asn546 is glycosylated (N-linked (GlcNAc...) asparagine). The active-site Charge relay system is Ser549.

The protein belongs to the peptidase S8 family. In terms of assembly, heterodimer between p54 form and prodomain p31; the interaction inhibits p54 catalytic activity. Heterodimer p31-p54 is monomeric at basic pH and dimeric at acidic pH; dimerization is driven by the N-terminal prodomain (p31). Ca(2+) is required as a cofactor. Post-translationally, the prodomain (p31) is cleaved, probably by autocatalysis, and remains non-covalently associated with the p54 form as an inhibitor. p54 is further cleaved into the p45/p47 forms. In terms of processing, the relevance of the N-glycosylation is not clear. In an insect expression system, SUB1 glycosylation appears to affect its processing into the active mature form suggesting that SUB1 may not be N-glycosylated in parasites.

It localises to the secreted. Its subcellular location is the parasitophorous vacuole lumen. It catalyses the reaction Hydrolysis of proteins with broad specificity for peptide bonds, and a preference for a large uncharged residue in P1. Hydrolyzes peptide amides.. Its activity is regulated as follows. Inhibited by peptidic alpha-ketoamide inhibitors. Inhibited by the alpha-ketoamide nonapeptide JMV5126 (isocaproyl-KITAQ(CO)DDEE-NH2). Inhibited by the alpha-ketoamide peptide MAM-117. Functionally, serine protease which plays an essential role in merozoite invasion of and egress from host erythrocytes by processing and activating various merozoite surface and parasitophorous vacuole proteins. The chain is Subtilisin-like protease 1 from Plasmodium vivax.